Consider the following 83-residue polypeptide: Apolipoprotein C-I, acidic form (83 aa).

The signal sequence occupies residues 1 to 26 (MRLFLSLPVLVVVLSMVLEGPAPAQG).

The protein belongs to the apolipoprotein C1 family.

It localises to the secreted. In terms of biological role, inhibitor of lipoprotein binding to the low density lipoprotein (LDL) receptor, LDL receptor-related protein, and very low density lipoprotein (VLDL) receptor. Associates with high density lipoproteins (HDL) and the triacylglycerol-rich lipoproteins in the plasma and makes up about 10% of the protein of the VLDL and 2% of that of HDL. Appears to interfere directly with fatty acid uptake and is also the major plasma inhibitor of cholesteryl ester transfer protein (CETP). Binds free fatty acids and reduces their intracellular esterification. Modulates the interaction of APOE with beta-migrating VLDL and inhibits binding of beta-VLDL to the LDL receptor-related protein. This is Apolipoprotein C-I, acidic form (APOC1A) from Pongo abelii (Sumatran orangutan).